Here is a 356-residue protein sequence, read N- to C-terminus: tRNA N6-adenosine threonylcarbamoyltransferase (356 aa).

Residues His114 and His118 each coordinate Fe cation. Substrate contacts are provided by residues 136–140 (LVSGG), Asp169, Gly182, and Asn280. Asp308 is a binding site for Fe cation. Residues 333 to 356 (ARPRWPLDNSQPALLGSGKKGAKA) form a disordered region.

Belongs to the KAE1 / TsaD family. Requires Fe(2+) as cofactor.

Its subcellular location is the cytoplasm. The catalysed reaction is L-threonylcarbamoyladenylate + adenosine(37) in tRNA = N(6)-L-threonylcarbamoyladenosine(37) in tRNA + AMP + H(+). Required for the formation of a threonylcarbamoyl group on adenosine at position 37 (t(6)A37) in tRNAs that read codons beginning with adenine. Is involved in the transfer of the threonylcarbamoyl moiety of threonylcarbamoyl-AMP (TC-AMP) to the N6 group of A37, together with TsaE and TsaB. TsaD likely plays a direct catalytic role in this reaction. The polypeptide is tRNA N6-adenosine threonylcarbamoyltransferase (Dinoroseobacter shibae (strain DSM 16493 / NCIMB 14021 / DFL 12)).